Here is a 228-residue protein sequence, read N- to C-terminus: DNA mismatch repair protein MutH (228 aa).

Belongs to the MutH family.

The protein localises to the cytoplasm. Sequence-specific endonuclease that cleaves unmethylated GATC sequences. It is involved in DNA mismatch repair. This Yersinia enterocolitica serotype O:8 / biotype 1B (strain NCTC 13174 / 8081) protein is DNA mismatch repair protein MutH.